The sequence spans 175 residues: Peptide deformylase (175 aa).

2 residues coordinate Fe cation: C99 and H141. E142 is a catalytic residue. H145 contributes to the Fe cation binding site.

The protein belongs to the polypeptide deformylase family. The cofactor is Fe(2+).

The enzyme catalyses N-terminal N-formyl-L-methionyl-[peptide] + H2O = N-terminal L-methionyl-[peptide] + formate. Functionally, removes the formyl group from the N-terminal Met of newly synthesized proteins. Requires at least a dipeptide for an efficient rate of reaction. N-terminal L-methionine is a prerequisite for activity but the enzyme has broad specificity at other positions. The polypeptide is Peptide deformylase (Rickettsia canadensis (strain McKiel)).